The chain runs to 177 residues: Large ribosomal subunit protein uL6 (177 aa).

It belongs to the universal ribosomal protein uL6 family. In terms of assembly, part of the 50S ribosomal subunit.

Its function is as follows. This protein binds to the 23S rRNA, and is important in its secondary structure. It is located near the subunit interface in the base of the L7/L12 stalk, and near the tRNA binding site of the peptidyltransferase center. This Nitrobacter winogradskyi (strain ATCC 25391 / DSM 10237 / CIP 104748 / NCIMB 11846 / Nb-255) protein is Large ribosomal subunit protein uL6.